A 201-amino-acid chain; its full sequence is Large ribosomal subunit protein uL4 (201 aa).

A disordered region spans residues 45–73 (AQKTRAEVTGSGKKPWRQKGTGRARAGSV).

Belongs to the universal ribosomal protein uL4 family. In terms of assembly, part of the 50S ribosomal subunit.

In terms of biological role, one of the primary rRNA binding proteins, this protein initially binds near the 5'-end of the 23S rRNA. It is important during the early stages of 50S assembly. It makes multiple contacts with different domains of the 23S rRNA in the assembled 50S subunit and ribosome. Its function is as follows. Forms part of the polypeptide exit tunnel. This is Large ribosomal subunit protein uL4 from Yersinia pseudotuberculosis serotype O:1b (strain IP 31758).